A 338-amino-acid polypeptide reads, in one-letter code: E3 ubiquitin-protein ligase SPL1 (338 aa).

The chain crosses the membrane as a helical span at residues 1–21 (MIHLAGFTCCLGGVALYLLTR). The Chloroplast intermembrane portion of the chain corresponds to 22-223 (STGRDIKSIT…KLGDLSRRFK (202 aa)). The helical transmembrane segment at 224–246 (YASMGLTVLGVILISKPVIEYIL) threads the bilayer. The Cytoplasmic segment spans residues 247 to 338 (KRIEDTLERR…IQQVLKIYRH (92 aa)). The segment at 291–326 (CVVCLDQKYNTAFVECGHMCCCTPCSLQLRTCPLCR) adopts an RING-type zinc-finger fold.

The protein resides in the plastid. It localises to the chloroplast outer membrane. It catalyses the reaction S-ubiquitinyl-[E2 ubiquitin-conjugating enzyme]-L-cysteine + [acceptor protein]-L-lysine = [E2 ubiquitin-conjugating enzyme]-L-cysteine + N(6)-ubiquitinyl-[acceptor protein]-L-lysine.. It functions in the pathway protein modification; protein ubiquitination. In terms of biological role, possesses E3 ubiquitin-protein ligase activity. In Arabidopsis thaliana (Mouse-ear cress), this protein is E3 ubiquitin-protein ligase SPL1.